Reading from the N-terminus, the 153-residue chain is Aspartate carbamoyltransferase regulatory chain (153 aa).

Zn(2+) contacts are provided by C109, C114, C138, and C141.

Belongs to the PyrI family. As to quaternary structure, contains catalytic and regulatory chains. The cofactor is Zn(2+).

Its function is as follows. Involved in allosteric regulation of aspartate carbamoyltransferase. The sequence is that of Aspartate carbamoyltransferase regulatory chain from Vibrio vulnificus (strain YJ016).